The sequence spans 335 residues: 2-acylglycerol O-acyltransferase 1 (335 aa).

A run of 2 helical transmembrane segments spans residues 18–38 (TVAV…SIGI) and 40–60 (VMLI…WLYF). N-linked (GlcNAc...) asparagine glycans are attached at residues Asn121 and Asn125. Residues 132–152 (LFPGFTSYLHVLPLWFWCPVF) traverse the membrane as a helical segment. The N-linked (GlcNAc...) asparagine glycan is linked to Asn180.

It belongs to the diacylglycerol acyltransferase family. As to expression, expressed in stomach and liver.

Its subcellular location is the endoplasmic reticulum membrane. It carries out the reaction a 2-acylglycerol + an acyl-CoA = a 1,2-diacylglycerol + CoA. The enzyme catalyses 2-(9Z-octadecenoyl)-glycerol + butanoyl-CoA = 1-butanoyl-2-(9Z-octadecenoyl)-glycerol + CoA. The catalysed reaction is 2-(9Z-octadecenoyl)-glycerol + octanoyl-CoA = 1-octanoyl-2-(9Z-octadecenoyl)-glycerol + CoA. It catalyses the reaction 2-(9Z-octadecenoyl)-glycerol + dodecanoyl-CoA = 1-dodecanoyl-2-(9Z-octadecenoyl)-glycerol + CoA. It carries out the reaction 2-(9Z-octadecenoyl)-glycerol + tetradecanoyl-CoA = 1-tetradecanoyl-2-(9Z-octadecenoyl)-glycerol + CoA. The enzyme catalyses 2-(9Z-octadecenoyl)-glycerol + hexadecanoyl-CoA = 1-hexadecanoyl-2-(9Z-octadecenoyl)-glycerol + CoA. The catalysed reaction is 2-(9Z-octadecenoyl)-glycerol + octadecanoyl-CoA = 1-octadecanoyl-2-(9Z-octadecenoyl)-glycerol + CoA. It catalyses the reaction eicosanoyl-CoA + 2-(9Z-octadecenoyl)-glycerol = 1-eicosanoyl-2-(9Z-octadecenoyl)-glycerol + CoA. It carries out the reaction 2-(9Z-octadecenoyl)-glycerol + (9Z)-octadecenoyl-CoA = 1,2-di-(9Z-octadecenoyl)-glycerol + CoA. The enzyme catalyses 2-(9Z-octadecenoyl)-glycerol + (9Z,12Z)-octadecadienoyl-CoA = 1-(9Z,12Z-octadecadienoyl)-2-(9Z-octadecenoyl)-glycerol + CoA. The catalysed reaction is 2-(9Z-octadecenoyl)-glycerol + (5Z,8Z,11Z,14Z)-eicosatetraenoyl-CoA = 1-(5Z,8Z,11Z,14Z-eicosatetraenoyl)-2-(9Z-octadecenoyl)-glycerol + CoA. It catalyses the reaction a 2-acylglycerol + an acyl-CoA = a 1,2-diacyl-sn-glycerol + CoA. It carries out the reaction a 2-acylglycerol + an acyl-CoA = a 2,3-diacyl-sn-glycerol + CoA. The enzyme catalyses a 1-acylglycerol + an acyl-CoA = a 1,2-diacylglycerol + CoA. The catalysed reaction is 1-dodecanoylglycerol + (9Z)-octadecenoyl-CoA = 1-dodecanoyl-2-(9Z-octadecenoyl)-glycerol + CoA. It catalyses the reaction 1-tetradecanoylglycerol + (9Z)-octadecenoyl-CoA = 1-tetradecanoyl-2-(9Z-octadecenoyl)-glycerol + CoA. It carries out the reaction 1-hexadecanoylglycerol + (9Z)-octadecenoyl-CoA = 1-hexadecanoyl-2-(9Z-octadecenoyl)-glycerol + CoA. The enzyme catalyses 1-(9Z-octadecenoyl)-glycerol + (9Z)-octadecenoyl-CoA = 1,2-di-(9Z-octadecenoyl)-glycerol + CoA. The catalysed reaction is 1-(9Z,12Z-octadecadienoyl)-glycerol + (9Z)-octadecenoyl-CoA = 1-(9Z,12Z-octadecadienoyl)-2-(9Z-octadecenoyl)-glycerol + CoA. It catalyses the reaction 1-(9Z,12Z,15Z-octadecatrienoyl)-glycerol + (9Z)-octadecenoyl-CoA = 1-(9Z,12Z,15Z-octadecatrienoyl)-2-(9Z-octadecenoyl)-glycerol + CoA. It carries out the reaction 1-(5Z,8Z,11Z,14Z-eicosatetraenoyl)-glycerol + (9Z)-octadecenoyl-CoA = 1-(5Z,8Z,11Z,14Z-eicosatetraenoyl)-2-(9Z-octadecenoyl)-glycerol + CoA. The enzyme catalyses a 1-acylglycerol + an acyl-CoA = a 1,3-diacylglycerol + CoA. The catalysed reaction is 1-dodecanoylglycerol + (9Z)-octadecenoyl-CoA = 1-dodecanoyl-3-(9Z-octadecenoyl)-glycerol + CoA. It catalyses the reaction 1-hexadecanoylglycerol + (9Z)-octadecenoyl-CoA = 1-(9Z-octadecenoyl)-3-hexadecanoylglycerol + CoA. It carries out the reaction 1-octadecanoylglycerol + (9Z)-octadecenoyl-CoA = 1-octadecanoyl-3-(9Z-octadecenoyl)-glycerol + CoA. The enzyme catalyses 1-(9Z-octadecenoyl)-sn-glycerol + (9Z)-octadecenoyl-CoA = 1,3-di-(9Z-octadecenoyl)-glycerol + CoA. The catalysed reaction is 1-(9Z,12Z-octadecadienoyl)-glycerol + (9Z)-octadecenoyl-CoA = 1-(9Z-octadecenoyl)-3-(9Z,12Z-octadecadienoyl)-glycerol + CoA. It catalyses the reaction 1-(9Z,12Z,15Z-octadecatrienoyl)-glycerol + (9Z)-octadecenoyl-CoA = 1-(9Z,12Z,15Z-octadecatrienoyl)-3-(9Z-octadecenoyl)-glycerol + CoA. It carries out the reaction a 1-acyl-sn-glycerol + an acyl-CoA = a 1,3-diacyl-sn-glycerol + CoA. The enzyme catalyses a 3-acyl-sn-glycerol + an acyl-CoA = a 1,3-diacyl-sn-glycerol + CoA. The catalysed reaction is 3-octadecanoyl-sn-glycerol + (9Z)-octadecenoyl-CoA = 1-(9Z-octadecenoyl)-3-octadecanoyl-sn-glycerol + CoA. Its pathway is glycerolipid metabolism; triacylglycerol biosynthesis. Involved in glycerolipid synthesis and lipid metabolism. Catalyzes the formation of diacylglycerol, the precursor of triacylglycerol, by transferring the acyl chain of a fatty acyl-CoA to a monoacylglycerol, mainly at the sn-1 or sn-3 positions. It uses both sn-2-monoacylglycerol (2-acylglycerol) and sn-1-monoacylglycerol (1-acyl-sn-glycerol) equally well as substrates, and uses sn-3-monoacylglycerol (3-acyl-sn-glycerol) with lower efficiency. Probably not involved in absorption of dietary fat in the small intestine. This Homo sapiens (Human) protein is 2-acylglycerol O-acyltransferase 1.